The primary structure comprises 95 residues: MSISREDIEKVAVLARIKVDGEQVSALEKDLGNILDLVDQLSAADTDAVEPMAHPLDAVQKLRPDVVTETNQREAFQAIAPATEDGLYLVPRVIE.

Belongs to the GatC family. Heterotrimer of A, B and C subunits.

It carries out the reaction L-glutamyl-tRNA(Gln) + L-glutamine + ATP + H2O = L-glutaminyl-tRNA(Gln) + L-glutamate + ADP + phosphate + H(+). The enzyme catalyses L-aspartyl-tRNA(Asn) + L-glutamine + ATP + H2O = L-asparaginyl-tRNA(Asn) + L-glutamate + ADP + phosphate + 2 H(+). Functionally, allows the formation of correctly charged Asn-tRNA(Asn) or Gln-tRNA(Gln) through the transamidation of misacylated Asp-tRNA(Asn) or Glu-tRNA(Gln) in organisms which lack either or both of asparaginyl-tRNA or glutaminyl-tRNA synthetases. The reaction takes place in the presence of glutamine and ATP through an activated phospho-Asp-tRNA(Asn) or phospho-Glu-tRNA(Gln). The polypeptide is Aspartyl/glutamyl-tRNA(Asn/Gln) amidotransferase subunit C (Marinobacter nauticus (strain ATCC 700491 / DSM 11845 / VT8) (Marinobacter aquaeolei)).